A 1408-amino-acid chain; its full sequence is DNA-directed RNA polymerase subunit beta' (1408 aa).

The Zn(2+) site is built by Cys70, Cys72, Cys85, and Cys88. Residues Asp460, Asp462, and Asp464 each contribute to the Mg(2+) site. Zn(2+) is bound by residues Cys814, Cys888, Cys895, and Cys898.

The protein belongs to the RNA polymerase beta' chain family. As to quaternary structure, the RNAP catalytic core consists of 2 alpha, 1 beta, 1 beta' and 1 omega subunit. When a sigma factor is associated with the core the holoenzyme is formed, which can initiate transcription. The cofactor is Mg(2+). Requires Zn(2+) as cofactor.

The catalysed reaction is RNA(n) + a ribonucleoside 5'-triphosphate = RNA(n+1) + diphosphate. Its function is as follows. DNA-dependent RNA polymerase catalyzes the transcription of DNA into RNA using the four ribonucleoside triphosphates as substrates. This chain is DNA-directed RNA polymerase subunit beta', found in Serratia proteamaculans (strain 568).